Reading from the N-terminus, the 103-residue chain is MDIQYLMRQAKKLEKAMADAKEQLAELSVEAESGGGLVKVTMNGKCEVTRLLVDPKAVDPADKAMLEDLVTAAVNAAVEKARAAADEHMARATGGIKIPGVAG.

It belongs to the YbaB/EbfC family. Homodimer.

It localises to the cytoplasm. The protein localises to the nucleoid. Binds to DNA and alters its conformation. May be involved in regulation of gene expression, nucleoid organization and DNA protection. This Anaeromyxobacter sp. (strain Fw109-5) protein is Nucleoid-associated protein Anae109_3761.